The primary structure comprises 184 residues: dCTP deaminase (184 aa).

DCTP-binding positions include 107–112, 131–133, Q152, Y166, and Q176; these read KSTYAR and TLE. The Proton donor/acceptor role is filled by E133.

This sequence belongs to the dCTP deaminase family. As to quaternary structure, homotrimer.

It carries out the reaction dCTP + H2O + H(+) = dUTP + NH4(+). It participates in pyrimidine metabolism; dUMP biosynthesis; dUMP from dCTP (dUTP route): step 1/2. Functionally, catalyzes the deamination of dCTP to dUTP. The sequence is that of dCTP deaminase from Novosphingobium aromaticivorans (strain ATCC 700278 / DSM 12444 / CCUG 56034 / CIP 105152 / NBRC 16084 / F199).